A 204-amino-acid polypeptide reads, in one-letter code: Holliday junction resolvase RecU (204 aa).

The Mg(2+) site is built by T89, D91, D104, and Q123.

The protein belongs to the RecU family. The cofactor is Mg(2+).

It localises to the cytoplasm. It carries out the reaction Endonucleolytic cleavage at a junction such as a reciprocal single-stranded crossover between two homologous DNA duplexes (Holliday junction).. Endonuclease that resolves Holliday junction intermediates in genetic recombination. Cleaves mobile four-strand junctions by introducing symmetrical nicks in paired strands. Promotes annealing of linear ssDNA with homologous dsDNA. Required for DNA repair, homologous recombination and chromosome segregation. This Leuconostoc mesenteroides subsp. mesenteroides (strain ATCC 8293 / DSM 20343 / BCRC 11652 / CCM 1803 / JCM 6124 / NCDO 523 / NBRC 100496 / NCIMB 8023 / NCTC 12954 / NRRL B-1118 / 37Y) protein is Holliday junction resolvase RecU.